Here is a 227-residue protein sequence, read N- to C-terminus: Ubiquitin-conjugating enzyme E2 6 (227 aa).

The Cytoplasmic portion of the chain corresponds to methionine 1–arginine 206. The 159-residue stretch at glycine 5–glutamate 163 folds into the UBC core domain. The active-site Glycyl thioester intermediate is cysteine 87. The helical transmembrane segment at tryptophan 207–alanine 225 threads the bilayer.

This sequence belongs to the ubiquitin-conjugating enzyme family.

It is found in the endoplasmic reticulum membrane. It carries out the reaction S-ubiquitinyl-[E1 ubiquitin-activating enzyme]-L-cysteine + [E2 ubiquitin-conjugating enzyme]-L-cysteine = [E1 ubiquitin-activating enzyme]-L-cysteine + S-ubiquitinyl-[E2 ubiquitin-conjugating enzyme]-L-cysteine.. The protein operates within protein modification; protein ubiquitination. Its function is as follows. Catalyzes the covalent attachment of ubiquitin to other proteins. Functions in degradation of misfolded or regulated proteins localized in the endoplasmic reticulum (ER) lumen or membrane via the ubiquitin-proteasome system. Cognate E2 conjugating enzyme for the doa10 ubiquitin ligase complex, which is part of the ERAD-C pathway responsible for the rapid degradation of membrane proteins with misfolded cytoplasmic domains. This Schizosaccharomyces pombe (strain 972 / ATCC 24843) (Fission yeast) protein is Ubiquitin-conjugating enzyme E2 6 (ubc6).